We begin with the raw amino-acid sequence, 432 residues long: MQLLTIGINHHTAPVALRERVAFPLEQIKPALSTFKSVFLGHPAPNAPEAAILSTCNRTELYCATDDRAARDAAIRWMSDYHRIPADELAPHVYALPQSEAVRHAFRVASGLDSMVLGETQILGQMKNAVRTASEAGSLGTYLNQLFQRTFAVAKEVRGTTEIGAQSVSMAAAAVRLAQRIFEQVAQQRVLFIGAGEMIELCATHFAAQGPRELVVANRTAERGAKLAERFGGRAMPLSDLPARMHEFDIIVSCTASTLPIIGLGAVERAVKARRHRPIFMVDLAVPRDIEPEVGKLKDVFLYTVDDLGAIVREGNASRQAAVAQAEAIIETRVQNFMQWLDARSIVPVIRHMHTQADALRRAELERARKMLARGDDPAAVLDALSQALTNKLIHGPTSALNRANGADRDSLIDLMRGFYQHAPRSSDTSDH.

Substrate contacts are provided by residues 55–58 (TCNR), S114, 119–121 (ETQ), and Q125. The active-site Nucleophile is C56. 194–199 (GAGEMI) is an NADP(+) binding site.

Belongs to the glutamyl-tRNA reductase family. As to quaternary structure, homodimer.

It catalyses the reaction (S)-4-amino-5-oxopentanoate + tRNA(Glu) + NADP(+) = L-glutamyl-tRNA(Glu) + NADPH + H(+). The protein operates within porphyrin-containing compound metabolism; protoporphyrin-IX biosynthesis; 5-aminolevulinate from L-glutamyl-tRNA(Glu): step 1/2. Functionally, catalyzes the NADPH-dependent reduction of glutamyl-tRNA(Glu) to glutamate 1-semialdehyde (GSA). The polypeptide is Glutamyl-tRNA reductase (Burkholderia thailandensis (strain ATCC 700388 / DSM 13276 / CCUG 48851 / CIP 106301 / E264)).